A 362-amino-acid polypeptide reads, in one-letter code: Uroporphyrinogen decarboxylase (362 aa).

Substrate contacts are provided by residues 39 to 43, Asp88, Tyr165, Thr220, and His334; that span reads RQAGR.

This sequence belongs to the uroporphyrinogen decarboxylase family. As to quaternary structure, homodimer.

The protein resides in the cytoplasm. The catalysed reaction is uroporphyrinogen III + 4 H(+) = coproporphyrinogen III + 4 CO2. Its pathway is porphyrin-containing compound metabolism; protoporphyrin-IX biosynthesis; coproporphyrinogen-III from 5-aminolevulinate: step 4/4. In terms of biological role, catalyzes the decarboxylation of four acetate groups of uroporphyrinogen-III to yield coproporphyrinogen-III. The chain is Uroporphyrinogen decarboxylase from Synechococcus sp. (strain JA-3-3Ab) (Cyanobacteria bacterium Yellowstone A-Prime).